We begin with the raw amino-acid sequence, 318 residues long: Lysophospholipase D GDPD3 (318 aa).

Residues 1–2 (MS) are Cytoplasmic-facing. The helical transmembrane segment at 3–23 (LLLYYALPALGSYAMLSIFFL) threads the bilayer. The Extracellular segment spans residues 24 to 198 (RRPHLLHTPR…KAANPEMPLS (175 aa)). In terms of domain architecture, GP-PDE spans 39–308 (IRLGAHRGGS…DYPTALRHYL (270 aa)). A divalent metal cation-binding residues include glutamate 71, aspartate 73, and histidine 86. Residues 199–221 (FTISRGFWVLLSYYLGLLPFIPI) form a helical membrane-spanning segment. Residues 222 to 318 (PEKFFFCFLP…DNHGPAARTS (97 aa)) lie on the Cytoplasmic side of the membrane.

This sequence belongs to the glycerophosphoryl diester phosphodiesterase family. In terms of tissue distribution, widely expressed, with high level in kidney and ovary.

It is found in the membrane. The protein localises to the cytoplasm. The protein resides in the perinuclear region. It localises to the endoplasmic reticulum. The catalysed reaction is 1-hexadecanoyl-sn-glycero-3-phosphocholine + H2O = 1-hexadecanoyl-sn-glycero-3-phosphate + choline + H(+). The enzyme catalyses 1-hexadecanoyl-sn-glycero-3-phosphocholine + H2O = sn-glycerol 3-phosphocholine + hexadecanoate + H(+). It catalyses the reaction 1-O-(1Z-octadecenyl)-sn-glycero-3-phospho-N-hexadecanoyl-ethanolamine + H2O = 1-O-(1Z-octadecenyl)-sn-glycero-3-phosphate + N-hexadecanoylethanolamine + H(+). It carries out the reaction N-(5Z,8Z,11Z,14Z-eicosatetraenoyl)-1-(9Z-octadecenoyl)-sn-glycero-3-phosphoethanolamine + H2O = N-(5Z,8Z,11Z,14Z-eicosatetraenoyl)-ethanolamine + 1-(9Z-octadecenoyl)-sn-glycero-3-phosphate + H(+). The catalysed reaction is N,1-di-(9Z-octadecenoyl)-sn-glycero-3-phosphoethanolamine + H2O = N-(9Z-octadecenoyl) ethanolamine + 1-(9Z-octadecenoyl)-sn-glycero-3-phosphate + H(+). The enzyme catalyses N-hexadecanoyl-1-(9Z-octadecenoyl)-sn-glycero-3-phosphoethanolamine + H2O = N-hexadecanoylethanolamine + 1-(9Z-octadecenoyl)-sn-glycero-3-phosphate + H(+). It catalyses the reaction 1-O-hexadecyl-sn-glycero-3-phosphocholine + H2O = 1-O-hexadecyl-sn-glycero-3-phosphate + choline + H(+). With respect to regulation, lysophospholipase D activity is stimulated by calcium. Loss of lysophospholipase D activity in presence of EDTA. In terms of biological role, hydrolyzes lysoglycerophospholipids to produce lysophosphatidic acid (LPA) and the corresponding amines. Shows a preference for 1-O-alkyl-sn-glycero-3-phosphocholine (lyso-PAF), lysophosphatidylcholine (lyso-PC) and N-acylethanolamine lysophospholipids. Does not display glycerophosphodiester phosphodiesterase activity, since it cannot hydrolyze either glycerophosphoinositol or glycerophosphocholine. This is Lysophospholipase D GDPD3 from Homo sapiens (Human).